We begin with the raw amino-acid sequence, 316 residues long: Epoxide hydrolase 3 (316 aa).

In terms of domain architecture, AB hydrolase-1 spans 25–302 (PVVLLLHGFP…ACHFINQERP (278 aa)). The Nucleophile role is filled by Asp-101. An an epoxide-binding site is contributed by Tyr-150. The active-site Proton donor is the Tyr-230. His-295 serves as the catalytic Proton acceptor.

The protein belongs to the AB hydrolase superfamily. Epoxide hydrolase family. In terms of assembly, homodimer. In terms of tissue distribution, highly expressed in young fruits 15 days after anthesis (15-DAA).

It carries out the reaction an epoxide + H2O = an ethanediol. The enzyme catalyses (24S)-24,25-epoxycucurbitadienol + H2O = (24R)-24,25-dihydroxycucurbitadienol. The protein operates within secondary metabolite biosynthesis; terpenoid biosynthesis. Functionally, epoxide hydrolase involved in the biosynthesis of cucurbitacin and mogroside tetracyclic triterpene natural products (e.g. siamenoside I and mogrosides IV, V and VI). Cucurbitacins have cytotoxic properties and exhibit deterrent taste as a defense barrier against herbivores. Mogrosides are nonsugar highly oxygenated compounds used as high-intensity zero-calorie sweeteners; they also possess pharmacological properties such as regulating immunity, lowering blood sugar and lipid levels, protecting the liver, and acting as antioxidants and antitumor agents. Catalyzes the hydrolysis of aromatic epoxide-containing substrates, such as the conversion of 24,25-epoxycucurbitadienol to 24,25-dihydroxycucurbitadienol. The polypeptide is Epoxide hydrolase 3 (Siraitia grosvenorii (Monk's fruit)).